A 389-amino-acid polypeptide reads, in one-letter code: Alanine racemase (389 aa).

Lys48 serves as the catalytic Proton acceptor; specific for D-alanine. N6-(pyridoxal phosphate)lysine is present on Lys48. Arg144 provides a ligand contact to substrate. The active-site Proton acceptor; specific for L-alanine is Tyr281. Met329 is a binding site for substrate.

It belongs to the alanine racemase family. Requires pyridoxal 5'-phosphate as cofactor.

It carries out the reaction L-alanine = D-alanine. Its pathway is amino-acid biosynthesis; D-alanine biosynthesis; D-alanine from L-alanine: step 1/1. Its function is as follows. Catalyzes the interconversion of L-alanine and D-alanine. May also act on other amino acids. This chain is Alanine racemase (alr), found in Leptospira interrogans serogroup Icterohaemorrhagiae serovar Lai (strain 56601).